A 307-amino-acid chain; its full sequence is Glutaminase (307 aa).

7 residues coordinate substrate: Ser66, Asn116, Glu160, Asn167, Tyr191, Tyr243, and Val261.

This sequence belongs to the glutaminase family. In terms of assembly, homotetramer.

The enzyme catalyses L-glutamine + H2O = L-glutamate + NH4(+). This Saccharophagus degradans (strain 2-40 / ATCC 43961 / DSM 17024) protein is Glutaminase.